The sequence spans 179 residues: Large ribosomal subunit protein uL5 (179 aa).

The protein belongs to the universal ribosomal protein uL5 family. In terms of assembly, part of the 50S ribosomal subunit; part of the 5S rRNA/L5/L18/L25 subcomplex. Contacts the 5S rRNA and the P site tRNA. Forms a bridge to the 30S subunit in the 70S ribosome.

Its function is as follows. This is one of the proteins that bind and probably mediate the attachment of the 5S RNA into the large ribosomal subunit, where it forms part of the central protuberance. In the 70S ribosome it contacts protein S13 of the 30S subunit (bridge B1b), connecting the 2 subunits; this bridge is implicated in subunit movement. Contacts the P site tRNA; the 5S rRNA and some of its associated proteins might help stabilize positioning of ribosome-bound tRNAs. The sequence is that of Large ribosomal subunit protein uL5 from Lysinibacillus sphaericus (strain C3-41).